The primary structure comprises 207 residues: ATP-dependent Clp protease proteolytic subunit (207 aa).

S111 acts as the Nucleophile in catalysis. Residue H136 is part of the active site.

Belongs to the peptidase S14 family. In terms of assembly, fourteen ClpP subunits assemble into 2 heptameric rings which stack back to back to give a disk-like structure with a central cavity, resembling the structure of eukaryotic proteasomes. Component of the ClpAP and ClpXP complexes.

Its subcellular location is the cytoplasm. It carries out the reaction Hydrolysis of proteins to small peptides in the presence of ATP and magnesium. alpha-casein is the usual test substrate. In the absence of ATP, only oligopeptides shorter than five residues are hydrolyzed (such as succinyl-Leu-Tyr-|-NHMec, and Leu-Tyr-Leu-|-Tyr-Trp, in which cleavage of the -Tyr-|-Leu- and -Tyr-|-Trp bonds also occurs).. Functionally, cleaves peptides in various proteins in a process that requires ATP hydrolysis. Has a chymotrypsin-like activity. Plays a major role in the degradation of misfolded proteins. The chain is ATP-dependent Clp protease proteolytic subunit from Escherichia coli O139:H28 (strain E24377A / ETEC).